The primary structure comprises 420 residues: Gamma-glutamyl phosphate reductase (420 aa).

This sequence belongs to the gamma-glutamyl phosphate reductase family.

It is found in the cytoplasm. It carries out the reaction L-glutamate 5-semialdehyde + phosphate + NADP(+) = L-glutamyl 5-phosphate + NADPH + H(+). It functions in the pathway amino-acid biosynthesis; L-proline biosynthesis; L-glutamate 5-semialdehyde from L-glutamate: step 2/2. Its function is as follows. Catalyzes the NADPH-dependent reduction of L-glutamate 5-phosphate into L-glutamate 5-semialdehyde and phosphate. The product spontaneously undergoes cyclization to form 1-pyrroline-5-carboxylate. This chain is Gamma-glutamyl phosphate reductase, found in Neisseria meningitidis serogroup B (strain ATCC BAA-335 / MC58).